Here is a 602-residue protein sequence, read N- to C-terminus: Exopolysaccharide phosphotransferase SCO2594 (602 aa).

A disordered region spans residues 251 to 271; the sequence is PRAGEDLDAGDGAAGGPRPGL.

This sequence belongs to the stealth family.

The chain is Exopolysaccharide phosphotransferase SCO2594 from Streptomyces coelicolor (strain ATCC BAA-471 / A3(2) / M145).